The following is a 167-amino-acid chain: uncharacterized protein (167 aa).

This is an uncharacterized protein from Methanocaldococcus jannaschii (strain ATCC 43067 / DSM 2661 / JAL-1 / JCM 10045 / NBRC 100440) (Methanococcus jannaschii).